The sequence spans 357 residues: Iron deficiency-induced protein A (357 aa).

Residues 1 to 36 constitute a signal peptide (tat-type signal); the sequence is MSESMFSRRDFLLGGTALAGTLLLDSFGDWRRRAEA. Positions 48, 49, 182, 238, and 239 each coordinate Fe cation.

It belongs to the bacterial solute-binding protein 1 family. Post-translationally, predicted to be exported by the Tat system. The position of the signal peptide cleavage has not been experimentally proven.

The protein localises to the cellular thylakoid membrane. Plays an important role in protecting the acceptor side of photosystem II (PSII) against oxidative damage, especially under iron-limiting growth conditions. Functionally, may also be part of a periplasmic ABC transporter complex involved in iron import. In Synechococcus elongatus (strain ATCC 33912 / PCC 7942 / FACHB-805) (Anacystis nidulans R2), this protein is Iron deficiency-induced protein A (idiA).